The following is a 568-amino-acid chain: Potassium-transporting ATPase potassium-binding subunit (568 aa).

A run of 10 helical transmembrane segments spans residues 3-23 (TEVL…YPLG), 68-88 (LLVV…TQGV), 133-153 (FVIM…MAGI), 180-200 (LLPL…PMGF), 256-276 (VECW…GFYL), 281-301 (LGYS…CINV), 375-395 (FGGV…AVFI), 421-441 (IVAL…AYLF), 497-517 (IVLI…AGIL), and 535-555 (VTFG…SFFP).

Belongs to the KdpA family. The system is composed of three essential subunits: KdpA, KdpB and KdpC.

The protein localises to the cell inner membrane. Functionally, part of the high-affinity ATP-driven potassium transport (or Kdp) system, which catalyzes the hydrolysis of ATP coupled with the electrogenic transport of potassium into the cytoplasm. This subunit binds the periplasmic potassium ions and delivers the ions to the membrane domain of KdpB through an intramembrane tunnel. The sequence is that of Potassium-transporting ATPase potassium-binding subunit from Phocaeicola vulgatus (strain ATCC 8482 / DSM 1447 / JCM 5826 / CCUG 4940 / NBRC 14291 / NCTC 11154) (Bacteroides vulgatus).